Consider the following 576-residue polypeptide: MAGKPPVLGLAFPARLRGGVLWKAIRAEAAGHVEREWFGSGPHRLKIALPRPEGLSARPHDPRPVDPAHGQKILSGALTLDGGALRLGVDGDPFDTASPSRRFAVSLHRFDWLPDLVAVGPDGARRALRLIDDWRRVFGKWNAFSWGPECLERRVHHLACAAKTLAAEASDAEVADLVFDLARQGRHLLEITRAPERTLERAVAAGLAGCVLAGKPGEPLIDAALKALVPQLDAMVLGDGGHATRSPEAGVELLFDLLTLDDALGQRGRPSPEALSRAIDRLSSATRFFILGDGHLAAFHGGETVGPARIAAALAHDDAGPRSLNAAPHSGYHKMIGGSIEVIADCGPPPVGPLSVNACAQPAAFEIVCAKDRLITSCGWSPEAAGAHAFRLSDAASTVSVADGSAGRPLSGFRAKALGPWLVDGAAKVEAKRHDDVGGVWLDIVHDGWRHLGLTHARRLFLDAVQDELRGEDSLSPLALDPKAAEGPRRYLPFAVRFHLHPDARASIARDGKSVLIRGPSNIGWWLRNDAVDVEIAPSAHFDHGLARKAGQIVLKSQVRPEVGAKIRWKLTKAEG.

Interacts with FtsZ filaments.

The protein localises to the cytoplasm. Its subcellular location is the cell inner membrane. Its function is as follows. Membrane anchor for FtsZ. Binds and recruits FtsZ polymers to membranes early in the cell cycle. May also improve the efficiency of cytokinesis through the regulation of cell wall hydrolysis. The polypeptide is FtsZ-localized protein C (Caulobacter vibrioides (strain NA1000 / CB15N) (Caulobacter crescentus)).